Here is a 543-residue protein sequence, read N- to C-terminus: Protein phosphatase 1G (543 aa).

Gly-2 carries N-myristoyl glycine lipidation. Residue Arg-22 is modified to Omega-N-methylarginine. Residues 26-503 (PYGFSAMQGW…DNMTCIIICF (478 aa)) form the PPM-type phosphatase domain. Asp-60 and Gly-61 together coordinate Mn(2+). Disordered regions lie at residues 116–139 (QIAGRPTEDEDEKEKVADEDDVDN) and 163–326 (NCHK…SDSG). Thr-122 carries the post-translational modification Phosphothreonine. Acidic residues predominate over residues 123 to 139 (EDEDEKEKVADEDDVDN). Position 183 is a phosphoserine (Ser-183). The span at 259–310 (DSEDESDEAEEEEEDSEECSEEEDGYSSEEAENEEDEDDTEEAEEDDEEEEM) shows a compositional bias: acidic residues. At Lys-381 the chain carries N6-acetyllysine. Mn(2+) is bound by residues Asp-439 and Asp-494. The interval 508–543 (TAAPQPESGKRKLEEVLSTEGAEENGNSDKKKAKRD) is disordered. Residue Ser-525 is modified to Phosphoserine.

This sequence belongs to the PP2C family. As to quaternary structure, interacts with NOL3; may dephosphorylate NOL3. Requires Mg(2+) as cofactor. Mn(2+) is required as a cofactor.

The protein resides in the cytoplasm. The protein localises to the membrane. It catalyses the reaction O-phospho-L-seryl-[protein] + H2O = L-seryl-[protein] + phosphate. It carries out the reaction O-phospho-L-threonyl-[protein] + H2O = L-threonyl-[protein] + phosphate. The polypeptide is Protein phosphatase 1G (PPM1G) (Bos taurus (Bovine)).